We begin with the raw amino-acid sequence, 125 residues long: Large ribosomal subunit protein bL20 (125 aa).

It belongs to the bacterial ribosomal protein bL20 family.

Its function is as follows. Binds directly to 23S ribosomal RNA and is necessary for the in vitro assembly process of the 50S ribosomal subunit. It is not involved in the protein synthesizing functions of that subunit. The chain is Large ribosomal subunit protein bL20 from Rhodospirillum rubrum (strain ATCC 11170 / ATH 1.1.1 / DSM 467 / LMG 4362 / NCIMB 8255 / S1).